We begin with the raw amino-acid sequence, 136 residues long: uncharacterized protein (136 aa).

Residues 14-34 (ASVFAFFVLFLFCLKIILVLF) traverse the membrane as a helical segment.

It is found in the membrane. This is an uncharacterized protein from Mycoplasma genitalium (strain ATCC 33530 / DSM 19775 / NCTC 10195 / G37) (Mycoplasmoides genitalium).